Consider the following 475-residue polypeptide: Ribulose bisphosphate carboxylase large chain (475 aa).

Residues 1 to 2 (MS) constitute a propeptide that is removed on maturation. Pro3 carries the N-acetylproline modification. Lys14 is modified (N6,N6,N6-trimethyllysine). Substrate-binding residues include Asn123 and Thr173. Lys175 functions as the Proton acceptor in the catalytic mechanism. Substrate is bound at residue Lys177. Positions 201, 203, and 204 each coordinate Mg(2+). Position 201 is an N6-carboxylysine (Lys201). The active-site Proton acceptor is the His294. Positions 295, 327, and 379 each coordinate substrate.

This sequence belongs to the RuBisCO large chain family. Type I subfamily. As to quaternary structure, heterohexadecamer of 8 large chains and 8 small chains; disulfide-linked. The disulfide link is formed within the large subunit homodimers. Mg(2+) is required as a cofactor. Post-translationally, the disulfide bond which can form in the large chain dimeric partners within the hexadecamer appears to be associated with oxidative stress and protein turnover.

It localises to the plastid. The protein localises to the chloroplast. The catalysed reaction is 2 (2R)-3-phosphoglycerate + 2 H(+) = D-ribulose 1,5-bisphosphate + CO2 + H2O. It catalyses the reaction D-ribulose 1,5-bisphosphate + O2 = 2-phosphoglycolate + (2R)-3-phosphoglycerate + 2 H(+). Functionally, ruBisCO catalyzes two reactions: the carboxylation of D-ribulose 1,5-bisphosphate, the primary event in carbon dioxide fixation, as well as the oxidative fragmentation of the pentose substrate in the photorespiration process. Both reactions occur simultaneously and in competition at the same active site. The sequence is that of Ribulose bisphosphate carboxylase large chain from Pinus edulis (Pinyon pine).